The following is a 627-amino-acid chain: Serine/threonine-protein phosphatase 2A 56 kDa regulatory subunit delta 2 isoform (627 aa).

The tract at residues 1–37 (MKGLRSKFVKALSLKDEQGSHKNGHSKSHYISKNGSY) is disordered.

It belongs to the phosphatase 2A regulatory subunit B family. As to quaternary structure, PP2A consists of a common heterodimeric core enzyme, composed of a 36 kDa catalytic subunit (subunit C) and a 65 kDa constant regulatory subunit (PR65 or subunit A), that associates with a variety of regulatory subunits. Proteins that associate with the core dimer include three families of regulatory subunits B (the R2/B/PR55/B55, R3/B''/PR72/PR130/PR59 and R5/B'/B56 families), the 48 kDa variable regulatory subunit, viral proteins, and cell signaling molecules.

It is found in the cytoplasm. Its subcellular location is the cell tip. The B regulatory subunit might modulate substrate selectivity and catalytic activity, and might also direct the localization of the catalytic enzyme to a particular subcellular compartment. Has a role in cell shape control and septum formation. The sequence is that of Serine/threonine-protein phosphatase 2A 56 kDa regulatory subunit delta 2 isoform (par2) from Schizosaccharomyces pombe (strain 972 / ATCC 24843) (Fission yeast).